A 303-amino-acid chain; its full sequence is MPKIITLMGPTASGKTALAIDLVQKHNCEIISVDSALIYRSMDIGTAKPSADELALAPHRLIDIRDPAESYSAADFRADALHEIEQILKAGKTPLLVGGTMMYFKALLEGLSPLPAADEALRAQIILEAEQRGWQDMHDELKRLDPVSSERIHPNDPQRLIRALEVCRISGKSMTELSQIKSEPLPYDVVQFAISPKDRKVLHISIEERFKLMLNQGFVDEVRALKKRSDLNLALPSMRCVGYRQCWQYLDGEFDYDTMVEKAIVATRQLAKRQLTWLRGWPELNWLESGVDSNLNTVLRHCR.

An ATP-binding site is contributed by 9–16; sequence GPTASGKT. 11–16 provides a ligand contact to substrate; that stretch reads TASGKT. 3 interaction with substrate tRNA regions span residues 34 to 37, 158 to 162, and 239 to 244; these read DSAL, QRLIR, and RCVGYR.

The protein belongs to the IPP transferase family. Monomer. The cofactor is Mg(2+).

It catalyses the reaction adenosine(37) in tRNA + dimethylallyl diphosphate = N(6)-dimethylallyladenosine(37) in tRNA + diphosphate. Catalyzes the transfer of a dimethylallyl group onto the adenine at position 37 in tRNAs that read codons beginning with uridine, leading to the formation of N6-(dimethylallyl)adenosine (i(6)A). This Shewanella sediminis (strain HAW-EB3) protein is tRNA dimethylallyltransferase 1.